The sequence spans 395 residues: [LysW]-aminoadipate semialdehyde transaminase (395 aa).

Pyridoxal 5'-phosphate is bound by residues 113-114 (GT) and Phe140. Arg143 contacts substrate. 225 to 228 (DEIQ) provides a ligand contact to pyridoxal 5'-phosphate. An N6-(pyridoxal phosphate)lysine modification is found at Lys254. Thr282 is a substrate binding site. Thr283 is a pyridoxal 5'-phosphate binding site.

The protein belongs to the class-III pyridoxal-phosphate-dependent aminotransferase family. LysJ subfamily. Homodimer. Requires pyridoxal 5'-phosphate as cofactor.

It localises to the cytoplasm. The catalysed reaction is [amino-group carrier protein]-C-terminal-gamma-(L-lysyl)-L-glutamate + 2-oxoglutarate = [amino-group carrier protein]-C-terminal-N-(1-carboxy-5-oxopentan-1-yl)-L-glutamine + L-glutamate. It functions in the pathway amino-acid biosynthesis; L-lysine biosynthesis via AAA pathway; L-lysine from L-alpha-aminoadipate (Thermus route): step 4/5. Its function is as follows. Catalyzes the transfer of the amino group of L-glutamate to [LysW]-aminoadipate 6-semialdehyde, generating [LysW]-gamma-L-lysine. In Thermus thermophilus (strain ATCC 27634 / DSM 579 / HB8), this protein is [LysW]-aminoadipate semialdehyde transaminase.